The following is a 120-amino-acid chain: Large ribosomal subunit protein bL17 (120 aa).

This sequence belongs to the bacterial ribosomal protein bL17 family. Part of the 50S ribosomal subunit. Contacts protein L32.

The protein is Large ribosomal subunit protein bL17 of Mesomycoplasma hyopneumoniae (strain 7448) (Mycoplasma hyopneumoniae).